Consider the following 155-residue polypeptide: DNA gyrase inhibitor (155 aa).

This sequence belongs to the DNA gyrase inhibitor family. As to quaternary structure, interacts with DNA gyrase.

Its subcellular location is the cytoplasm. Inhibits the supercoiling activity of DNA gyrase. Acts by inhibiting DNA gyrase at an early step, prior to (or at the step of) binding of DNA by the gyrase. It protects cells against toxins that target DNA gyrase, by inhibiting activity of these toxins and reducing the formation of lethal double-strand breaks in the cell. The chain is DNA gyrase inhibitor from Erwinia billingiae (strain Eb661).